The sequence spans 624 residues: Chaperone protein HtpG (624 aa).

Residues 1 to 336 form an a; substrate-binding region; that stretch reads MKGQETRGFQ…SSDLPLNVSR (336 aa). The interval 337–552 is b; sequence EILQDSTVTR…ADEMSTQMAK (216 aa). Residues 553–624 are c; it reads LFAAAGQKVP…IRRMNQLLVS (72 aa).

This sequence belongs to the heat shock protein 90 family. As to quaternary structure, homodimer.

Its subcellular location is the cytoplasm. Functionally, molecular chaperone. Has ATPase activity. The chain is Chaperone protein HtpG from Escherichia coli O139:H28 (strain E24377A / ETEC).